The sequence spans 555 residues: Glutamine--tRNA ligase (555 aa).

The 'HIGH' region signature appears at 34-44; the sequence is PEPNGYLHIGH. ATP contacts are provided by residues 35 to 37 and 41 to 47; these read EPN and HIGHAKS. 2 residues coordinate L-glutamine: Asp-67 and Tyr-212. ATP is bound by residues Thr-231, 261 to 262, and 269 to 271; these read RL and MSK. A 'KMSKS' region motif is present at residues 268–272; sequence VMSKR.

Belongs to the class-I aminoacyl-tRNA synthetase family. Monomer.

The protein localises to the cytoplasm. The catalysed reaction is tRNA(Gln) + L-glutamine + ATP = L-glutaminyl-tRNA(Gln) + AMP + diphosphate. In Proteus mirabilis (strain HI4320), this protein is Glutamine--tRNA ligase.